The following is a 256-amino-acid chain: MALPDFSMRQLLEAGVHFGHQTHRWNPKMAPYIYGDRNNIHILDLSQTVPLLHNALKIVSDTVARGGRVLFVGTKRQASDIIADAANRSAQYYVNARWLGGMMTNWKTISNSIQRLRKLDELLAGEAQGFTKKERLNLEREREKLDRALGGIKDMGSVPDLMFIIDTNKEAIAIQEAKRLGIPVVAVIDSNCDPDQIDYPIPGNDDAARAIALYCDLIARAALDGIARQQGAMGIDVGAQAEAPVEPALEAPAEGA.

This sequence belongs to the universal ribosomal protein uS2 family.

The sequence is that of Small ribosomal subunit protein uS2 from Brucella anthropi (strain ATCC 49188 / DSM 6882 / CCUG 24695 / JCM 21032 / LMG 3331 / NBRC 15819 / NCTC 12168 / Alc 37) (Ochrobactrum anthropi).